Here is a 173-residue protein sequence, read N- to C-terminus: Ribosome maturation factor RimM (173 aa).

In terms of domain architecture, PRC barrel spans 92-165 (EDEYYHTDLI…RVVVALPQEI (74 aa)).

The protein belongs to the RimM family. Binds ribosomal protein uS19.

Its subcellular location is the cytoplasm. Functionally, an accessory protein needed during the final step in the assembly of 30S ribosomal subunit, possibly for assembly of the head region. Essential for efficient processing of 16S rRNA. May be needed both before and after RbfA during the maturation of 16S rRNA. It has affinity for free ribosomal 30S subunits but not for 70S ribosomes. The protein is Ribosome maturation factor RimM of Bradyrhizobium diazoefficiens (strain JCM 10833 / BCRC 13528 / IAM 13628 / NBRC 14792 / USDA 110).